Reading from the N-terminus, the 309-residue chain is Glutaminase (309 aa).

Positions 64, 114, 160, 167, 191, 243, and 261 each coordinate substrate.

It belongs to the glutaminase family. As to quaternary structure, homotetramer.

It catalyses the reaction L-glutamine + H2O = L-glutamate + NH4(+). The polypeptide is Glutaminase (Methylobacterium radiotolerans (strain ATCC 27329 / DSM 1819 / JCM 2831 / NBRC 15690 / NCIMB 10815 / 0-1)).